Consider the following 113-residue polypeptide: Protein Asterix (113 aa).

Residues 81-97 form a helical membrane-spanning segment; sequence IVSSFMLSVSAVVMSYL.

Belongs to the Asterix family.

It is found in the membrane. In Caenorhabditis elegans, this protein is Protein Asterix.